Consider the following 351-residue polypeptide: Nicotinate-nucleotide--dimethylbenzimidazole phosphoribosyltransferase (351 aa).

Glutamate 317 functions as the Proton acceptor in the catalytic mechanism.

The protein belongs to the CobT family.

It carries out the reaction 5,6-dimethylbenzimidazole + nicotinate beta-D-ribonucleotide = alpha-ribazole 5'-phosphate + nicotinate + H(+). The protein operates within nucleoside biosynthesis; alpha-ribazole biosynthesis; alpha-ribazole from 5,6-dimethylbenzimidazole: step 1/2. In terms of biological role, catalyzes the synthesis of alpha-ribazole-5'-phosphate from nicotinate mononucleotide (NAMN) and 5,6-dimethylbenzimidazole (DMB). The polypeptide is Nicotinate-nucleotide--dimethylbenzimidazole phosphoribosyltransferase (Pseudomonas aeruginosa (strain UCBPP-PA14)).